The primary structure comprises 413 residues: MAATVSTIGAVNRTTLNNSNYGGLVPNSAFLGSRLKVSSRFTTSKMVTGNFKIVAEQDEEKQTEKDKWRGLAFDTSDDQQDITRGKGLADPLFQAPMGTGTHNAVLSSYEYISAGLRDYSYDNNVDGFYIAPAFMDKLTVHIVKNFLTLPNIKVPLILGVWGGKGQGKSFQCELVFAKMGINPIMMSAGELESGNAGEPAKLIRQRYREAADIIKKGKMCCLFINDLDAGAGRLGGTTQYTVNNQMVNATLMNIADNPTNVQLPGMYNKEENPRVPIIVTGNDFSTLYAPLIRDGRMDKFYWAPTREDRIGICTGIFRTDGVPFEDIVKLVDTFPGQSIDFFGALRARVYDDEVRKWAVGVGVERIGRNLVNSKESPPTFDQPKMTIEKLLEYGNMLVMEQENVKRVKLVTSI.

Residues 1 to 54 constitute a chloroplast transit peptide; sequence MAATVSTIGAVNRTTLNNSNYGGLVPNSAFLGSRLKVSSRFTTSKMVTGNFKIV. 162 to 169 contributes to the ATP binding site; that stretch reads GGKGQGKS.

The protein belongs to the RuBisCO activase family.

It localises to the plastid. The protein resides in the chloroplast stroma. Functionally, activation of RuBisCO (ribulose-1,5-bisphosphate carboxylase/oxygenase; EC 4.1.1.39) involves the ATP-dependent carboxylation of the epsilon-amino group of lysine leading to a carbamate structure. The polypeptide is Ribulose bisphosphate carboxylase/oxygenase activase, chloroplastic (Cucumis sativus (Cucumber)).